Reading from the N-terminus, the 489-residue chain is Actin-related protein 4 (489 aa).

The tract at residues 323 to 379 (KRTKPSGVNKSDKKVTPTEEKEQEAVSKSTSPAANSADTPNETGKRPLEEEKPPKEN) is disordered. Basic and acidic residues predominate over residues 332–347 (KSDKKVTPTEEKEQEA). Residues 348 to 364 (VSKSTSPAANSADTPNE) are compositionally biased toward polar residues. Ser349 carries the phosphoserine modification. Residues 365–379 (TGKRPLEEEKPPKEN) are compositionally biased toward basic and acidic residues.

The protein belongs to the actin family. ARP4 subfamily. As to quaternary structure, component of the NuA4 histone acetyltransferase complex composed of at least ACT1, ARP4, EAF3, EAF5, EAF6, EAF7, EPL1, ESA1, SWC4, TRA1, VID21, YAF9 and YNG2. Component of the chromatin-remodeling INO80 complex, at least composed of ARP4, ARP5, ARP8, RVB1, RVB2, TAF14, NHP10, IES1, IES3, IES4, IES6, ACT1, IES2, IES5 and INO80. Component of the SWR1 chromatin remodeling complex composed of at least ACT1, ARP4, RVB1, RVB2, ARP6, YAF9, VPS71, VPS72, SWC3, SWC4, SWC5, SWC7 and SWR1, and perhaps BDF1. Interacts with histones H4 (HHF1 and HHF2), H3 (HHT1 and HHT2) and H2A (HTA1 and HTA2).

It is found in the nucleus. Chromatin interaction component of the NuA4 histone acetyltransferase complex which is involved in transcriptional activation of selected genes principally by acetylation of nucleosomal histone H4 and H2A. The NuA4 complex is also involved in DNA repair. ARP4 recognizes H2AS128ph (gamma-H2A) and is required for NuA4 complex integrity. Component of the SWR1 complex which mediates the ATP-dependent exchange of histone H2A for the H2A variant HZT1 leading to transcriptional regulation of selected genes by chromatin remodeling. Component of the INO80 complex which remodels chromatin by shifting nucleosomes. Its ability to induce transcription of some phosphate-responsive genes is modulated by inositol polyphosphates. The INO80 complex is involved in DNA repair by associating to gamma-H2A as a response to DNA damage. In Saccharomyces cerevisiae (strain ATCC 204508 / S288c) (Baker's yeast), this protein is Actin-related protein 4 (ARP4).